The primary structure comprises 622 residues: Coiled-coil domain-containing protein 17 (622 aa).

Coiled-coil stretches lie at residues 81-102 (RSALKRLTEEVQWLRLSLQEMR), 146-207 (ARRV…LEVL), and 294-320 (GELPVVEAENRRLEAEILALQMQRGRA). Disordered stretches follow at residues 334–356 (SLQPKGRRDPPLLPPPVAPPLPP) and 584–622 (PAVGFADPPPRTEEPLSGVKDRDEGLGPHHSSDLPPVSF). Positions 344 to 356 (PLLPPPVAPPLPP) are enriched in pro residues. Over residues 593–615 (PRTEEPLSGVKDRDEGLGPHHSS) the composition is skewed to basic and acidic residues.

This chain is Coiled-coil domain-containing protein 17 (CCDC17), found in Homo sapiens (Human).